The primary structure comprises 670 residues: Zinc finger protein 526 (670 aa).

C2H2-type zinc fingers lie at residues 57–79, 108–130, and 140–163; these read FMCSECGSLYNTLEEVLSHQEQH, FQCGECSQLILSPGELLAHQDAH, and YQCWDCQELFPSPELWVAHRKAQH. Disordered regions lie at residues 168 to 196 and 217 to 304; these read VAEPPVPPPLPPPTPLPPPSPPSEVKMEP and GTHF…ATHP. Positions 171–189 are enriched in pro residues; sequence PPVPPPLPPPTPLPPPSPP. A C2H2-type 4 zinc finger spans residues 197–219; the sequence is YECPECSTLCATPEEFLEHQGTH. Over residues 217–231 the composition is skewed to basic and acidic residues; that stretch reads GTHFDSLEKEERNGL. Residues 232–263 are compositionally biased toward acidic residues; sequence EEEEEDDEEDEEDDEEMEDEEAMAEVGDDAVG. 9 consecutive C2H2-type zinc fingers follow at residues 305 to 327, 332 to 354, 360 to 382, 388 to 409, 442 to 465, 472 to 494, 500 to 522, 528 to 550, and 573 to 595; these read FHCSQCQRSFSSANRLQAHGRAH, HECTTCSKVFKKAASLEQHLRLH, YLCVDCGRGFGTELTLVAHRRAH, HRCRCGKTFSNMTKFLYHRRTH, LPCPQCSKSFASASRLSRHRRAVH, HRCGVCGKGFKKLIHVRNHLRTH, FQCHSCGKTFASLANLSRHQLTH, YQCLDCGKRFTQSSNLQQHRRLH, and YYCGTCGRWFRAMAGLRLHQRVH. Residues 409–443 are disordered; the sequence is HAGKSGAPPTGATAPPAPAEPTPPPPPPAPPAQLP. The span at 423–442 shows a compositional bias: pro residues; it reads PPAPAEPTPPPPPPAPPAQL. Positions 601 to 621 are disordered; sequence LTLQPPRSPSPAPPPPPEPQQ. Positions 606-619 are enriched in pro residues; the sequence is PRSPSPAPPPPPEP.

The protein belongs to the krueppel C2H2-type zinc-finger protein family. As to expression, widely expressed.

Its subcellular location is the nucleus. Functionally, may be involved in transcriptional regulation. This chain is Zinc finger protein 526 (ZNF526), found in Homo sapiens (Human).